Consider the following 276-residue polypeptide: Undecaprenyl-diphosphatase (276 aa).

Transmembrane regions (helical) follow at residues 43 to 63 (RAMAFNIIIQLAAILAVVWEF), 85 to 105 (GNLLLAFMPAVVLGVLFADLI), 109 to 129 (LFNPVTVAAALVVGGVIMLWA), 183 to 203 (AATEFSFFLAMPTMVGAAVYS), 214 to 234 (GDLPVFALGFVTSFIFAMIAV), and 249 to 269 (FAWYRIVFGLFILATWQFGWV).

It belongs to the UppP family.

It localises to the cell inner membrane. The catalysed reaction is di-trans,octa-cis-undecaprenyl diphosphate + H2O = di-trans,octa-cis-undecaprenyl phosphate + phosphate + H(+). In terms of biological role, catalyzes the dephosphorylation of undecaprenyl diphosphate (UPP). Confers resistance to bacitracin. This is Undecaprenyl-diphosphatase from Pseudomonas putida (strain ATCC 700007 / DSM 6899 / JCM 31910 / BCRC 17059 / LMG 24140 / F1).